Here is a 77-residue protein sequence, read N- to C-terminus: Small ribosomal subunit protein uS17 (77 aa).

It belongs to the universal ribosomal protein uS17 family. Part of the 30S ribosomal subunit.

One of the primary rRNA binding proteins, it binds specifically to the 5'-end of 16S ribosomal RNA. This Rickettsia rickettsii (strain Sheila Smith) protein is Small ribosomal subunit protein uS17.